A 214-amino-acid polypeptide reads, in one-letter code: Probable transaldolase (214 aa).

Catalysis depends on lysine 83, which acts as the Schiff-base intermediate with substrate.

Belongs to the transaldolase family. Type 3B subfamily.

It is found in the cytoplasm. It catalyses the reaction D-sedoheptulose 7-phosphate + D-glyceraldehyde 3-phosphate = D-erythrose 4-phosphate + beta-D-fructose 6-phosphate. The protein operates within carbohydrate degradation; pentose phosphate pathway; D-glyceraldehyde 3-phosphate and beta-D-fructose 6-phosphate from D-ribose 5-phosphate and D-xylulose 5-phosphate (non-oxidative stage): step 2/3. Functionally, transaldolase is important for the balance of metabolites in the pentose-phosphate pathway. The protein is Probable transaldolase of Dictyoglomus turgidum (strain DSM 6724 / Z-1310).